A 446-amino-acid polypeptide reads, in one-letter code: F-box/LRR-repeat protein At4g29420 (446 aa).

The 51-residue stretch at 1 to 51 folds into the F-box domain; sequence MDELPPELWIKILSRINDSESLARCRVASKTLNSLSREVRAVNLICTWSRY. 8 LRR repeats span residues 59–84, 103–130, 135–160, 181–206, 223–248, 265–289, 318–343, and 382–407; these read VVTPFKTIFRSLIENSSKIRSISVGV, DLYLTDVEFVKEWLPRVREDLENLSISD, SCWRKSDILALISSNCSKLVKLEVKN, FIRLDDENLEKVNDCFPFLQELNLIG, CHWTVSNAPLSLAIVAPNLLELKLKC, HLSVEDAEGVSFGEFQDLKTLELVS, QSERLELGLATILKAFPGITSLSLSP, and NVHQTVSFIRSIVNKYRGLTDMRLMI.

In Arabidopsis thaliana (Mouse-ear cress), this protein is F-box/LRR-repeat protein At4g29420.